The chain runs to 276 residues: NADPH-dependent 7-cyano-7-deazaguanine reductase (276 aa).

Position 83 to 85 (83 to 85) interacts with substrate; it reads IES. 85 to 86 contributes to the NADPH binding site; the sequence is SK. Cys184 serves as the catalytic Thioimide intermediate. The Proton donor role is filled by Asp191. 223 to 224 serves as a coordination point for substrate; it reads HE. 252–253 contributes to the NADPH binding site; the sequence is RG.

The protein belongs to the GTP cyclohydrolase I family. QueF type 2 subfamily. Homodimer.

The protein resides in the cytoplasm. The catalysed reaction is 7-aminomethyl-7-carbaguanine + 2 NADP(+) = 7-cyano-7-deazaguanine + 2 NADPH + 3 H(+). Its pathway is tRNA modification; tRNA-queuosine biosynthesis. In terms of biological role, catalyzes the NADPH-dependent reduction of 7-cyano-7-deazaguanine (preQ0) to 7-aminomethyl-7-deazaguanine (preQ1). The chain is NADPH-dependent 7-cyano-7-deazaguanine reductase from Pseudomonas aeruginosa (strain ATCC 15692 / DSM 22644 / CIP 104116 / JCM 14847 / LMG 12228 / 1C / PRS 101 / PAO1).